Here is an 844-residue protein sequence, read N- to C-terminus: Protein translocase subunit SecA 1 (844 aa).

ATP-binding positions include Q91, 109-113 (GEGKT), and D498. The span at 793-813 (KSKSFGEAKHVTAEDGKEKAK) shows a compositional bias: basic and acidic residues. Residues 793–825 (KSKSFGEAKHVTAEDGKEKAKPQPIVKGDQVGR) are disordered. 4 residues coordinate Zn(2+): C829, C831, C840, and H841.

This sequence belongs to the SecA family. In terms of assembly, monomer and homodimer. Part of the essential Sec protein translocation apparatus which comprises SecA, SecYEG and auxiliary proteins SecDF. Other proteins may also be involved. The cofactor is Zn(2+).

The protein localises to the cell membrane. It localises to the cytoplasm. The catalysed reaction is ATP + H2O + cellular proteinSide 1 = ADP + phosphate + cellular proteinSide 2.. Part of the Sec protein translocase complex. Interacts with the SecYEG preprotein conducting channel. Has a central role in coupling the hydrolysis of ATP to the transfer of proteins into and across the cell membrane, serving as an ATP-driven molecular motor driving the stepwise translocation of polypeptide chains across the membrane. The sequence is that of Protein translocase subunit SecA 1 from Staphylococcus epidermidis (strain ATCC 35984 / DSM 28319 / BCRC 17069 / CCUG 31568 / BM 3577 / RP62A).